The following is a 244-amino-acid chain: Large ribosomal subunit protein uL30 (244 aa).

This sequence belongs to the universal ribosomal protein uL30 family.

The polypeptide is Large ribosomal subunit protein uL30 (RPL7) (Candida glabrata (strain ATCC 2001 / BCRC 20586 / JCM 3761 / NBRC 0622 / NRRL Y-65 / CBS 138) (Yeast)).